The primary structure comprises 136 residues: NADPH-dependent 7-cyano-7-deazaguanine reductase (136 aa).

The active-site Thioimide intermediate is Cys50. The active-site Proton donor is the Asp57. Residues 72-74 and 91-92 contribute to the substrate site; these read YEL and HE.

It belongs to the GTP cyclohydrolase I family. QueF type 1 subfamily.

It is found in the cytoplasm. The enzyme catalyses 7-aminomethyl-7-carbaguanine + 2 NADP(+) = 7-cyano-7-deazaguanine + 2 NADPH + 3 H(+). Its pathway is tRNA modification; tRNA-queuosine biosynthesis. Functionally, catalyzes the NADPH-dependent reduction of 7-cyano-7-deazaguanine (preQ0) to 7-aminomethyl-7-deazaguanine (preQ1). This Prochlorococcus marinus (strain MIT 9515) protein is NADPH-dependent 7-cyano-7-deazaguanine reductase.